A 208-amino-acid chain; its full sequence is Pyridoxine/pyridoxamine 5'-phosphate oxidase (208 aa).

Residues 55–60 (RMVLLK), 70–71 (YT), lysine 76, lysine 77, and glutamine 99 each bind FMN. A substrate-binding site is contributed by lysine 60. Positions 117, 121, and 125 each coordinate substrate. FMN is bound by residues 134–135 (QS) and tryptophan 179. 185-187 (RLH) provides a ligand contact to substrate. Residue arginine 189 coordinates FMN.

Belongs to the pyridoxamine 5'-phosphate oxidase family. Homodimer. FMN is required as a cofactor.

The catalysed reaction is pyridoxamine 5'-phosphate + O2 + H2O = pyridoxal 5'-phosphate + H2O2 + NH4(+). The enzyme catalyses pyridoxine 5'-phosphate + O2 = pyridoxal 5'-phosphate + H2O2. The protein operates within cofactor metabolism; pyridoxal 5'-phosphate salvage; pyridoxal 5'-phosphate from pyridoxamine 5'-phosphate: step 1/1. Its pathway is cofactor metabolism; pyridoxal 5'-phosphate salvage; pyridoxal 5'-phosphate from pyridoxine 5'-phosphate: step 1/1. In terms of biological role, catalyzes the oxidation of either pyridoxine 5'-phosphate (PNP) or pyridoxamine 5'-phosphate (PMP) into pyridoxal 5'-phosphate (PLP). This Brucella ovis (strain ATCC 25840 / 63/290 / NCTC 10512) protein is Pyridoxine/pyridoxamine 5'-phosphate oxidase.